The following is a 426-amino-acid chain: Dihydroorotase (426 aa).

Zn(2+)-binding residues include histidine 58 and histidine 60. Substrate contacts are provided by residues 60–62 (HLR) and asparagine 92. Residues aspartate 150, histidine 177, and histidine 230 each coordinate Zn(2+). Substrate is bound at residue asparagine 276. Residue aspartate 303 coordinates Zn(2+). Aspartate 303 is an active-site residue. Histidine 307 provides a ligand contact to substrate.

Belongs to the metallo-dependent hydrolases superfamily. DHOase family. Class I DHOase subfamily. Requires Zn(2+) as cofactor.

The enzyme catalyses (S)-dihydroorotate + H2O = N-carbamoyl-L-aspartate + H(+). It participates in pyrimidine metabolism; UMP biosynthesis via de novo pathway; (S)-dihydroorotate from bicarbonate: step 3/3. Functionally, catalyzes the reversible cyclization of carbamoyl aspartate to dihydroorotate. The protein is Dihydroorotase of Acetivibrio thermocellus (strain ATCC 27405 / DSM 1237 / JCM 9322 / NBRC 103400 / NCIMB 10682 / NRRL B-4536 / VPI 7372) (Clostridium thermocellum).